A 190-amino-acid polypeptide reads, in one-letter code: 6,7-dimethyl-8-ribityllumazine synthase (190 aa).

5-amino-6-(D-ribitylamino)uracil contacts are provided by residues F23, 61–63 (SFE), and 85–87 (AVI). 90–91 (QT) lines the (2S)-2-hydroxy-3-oxobutyl phosphate pocket. H93 serves as the catalytic Proton donor. F118 contacts 5-amino-6-(D-ribitylamino)uracil. A (2S)-2-hydroxy-3-oxobutyl phosphate-binding site is contributed by R132.

It belongs to the DMRL synthase family.

It catalyses the reaction (2S)-2-hydroxy-3-oxobutyl phosphate + 5-amino-6-(D-ribitylamino)uracil = 6,7-dimethyl-8-(1-D-ribityl)lumazine + phosphate + 2 H2O + H(+). It functions in the pathway cofactor biosynthesis; riboflavin biosynthesis; riboflavin from 2-hydroxy-3-oxobutyl phosphate and 5-amino-6-(D-ribitylamino)uracil: step 1/2. Functionally, catalyzes the formation of 6,7-dimethyl-8-ribityllumazine by condensation of 5-amino-6-(D-ribitylamino)uracil with 3,4-dihydroxy-2-butanone 4-phosphate. This is the penultimate step in the biosynthesis of riboflavin. This chain is 6,7-dimethyl-8-ribityllumazine synthase, found in Nostoc sp. (strain PCC 7120 / SAG 25.82 / UTEX 2576).